Here is a 340-residue protein sequence, read N- to C-terminus: MNFIQEINGKISLNGNFAFILVIATTDVSLIPGITVAGATPELTHFTPAADAEFLIKEKCISINSVPVTPTGIPTPAIISRASLKLVNATKLVVNAGSRVKPKIPFIDVGGEPGGDIRKFSLTRETSQRILENSIILGEELANSYDFLVIGESIPAGTTTAMAVLLSLGYDAADKVSSASPVNPKDLKRKVVYEAIKDLPSDFLGKISKVSDPMLISVAGITIGFRKRVLLAGGTQMTAAAAIIKEIDKKIIQNISIGTTKWIIQDSSSDIVSISRQVGVPVMASLLDFSKSKYSGLRAYEEGFVKEGVGAGGSSIIALSKGFTPQDILVEIEKIYSKLI.

Belongs to the UPF0284 family.

The sequence is that of UPF0284 protein Saci_0020 from Sulfolobus acidocaldarius (strain ATCC 33909 / DSM 639 / JCM 8929 / NBRC 15157 / NCIMB 11770).